Consider the following 294-residue polypeptide: Aquaporin NIP2-2 (294 aa).

A run of 2 helical transmembrane segments spans residues 54-74 (VISE…AASI) and 88-108 (SVAG…ISGA). The NPA 1 signature appears at 111–113 (NPA). 3 consecutive transmembrane segments (helical) span residues 129-151 (VPFY…KAVL), 169-189 (ALLI…AVAT), and 197-217 (LAGL…GPVS). The short motif at 222–224 (NPA) is the NPA 2 element. Residues 235–255 (VFTGLWIYFLGPVIGTLSGAW) traverse the membrane as a helical segment.

The protein belongs to the MIP/aquaporin (TC 1.A.8) family. NIP (TC 1.A.8.12) subfamily.

The protein resides in the membrane. Functionally, aquaporins facilitate the transport of water and small neutral solutes across cell membranes. This Zea mays (Maize) protein is Aquaporin NIP2-2 (NIP2-2).